The sequence spans 200 residues: MALLTAETFRLQFNNKRRLRRPYYPRKALLCYQLTPQNGSTPTRGYFENKKKCHAEICFINEIKSMGLDETQCYQVTCYLTWSPCSSCAWELVDFIKAHDHLNLGIFASRLYYHWCKPQQKGLRLLCGSQVPVEVMGFPEFADCWENFVDHEKPLSFNPYKMLEELDKNSRAIKRRLERIKIPGVRAQGRYMDILCDAEV.

A CMP/dCMP-type deaminase domain is found at 4-126; sequence LTAETFRLQF…KPQQKGLRLL (123 aa). His-54 is a binding site for Zn(2+). Glu-56 serves as the catalytic Proton donor. The Zn(2+) site is built by Cys-85 and Cys-88. Residues 160 to 182 adopt a coiled-coil conformation; it reads YKMLEELDKNSRAIKRRLERIKI.

The protein belongs to the cytidine and deoxycytidylate deaminase family. Homodimer. Interacts with AGO1, AGO2 and AGO3. Zn(2+) serves as cofactor. Post-translationally, (Microbial infection) Following infection by some HIV-1 strains, such as isolate BRU/LAI, can be ubiquitinated by a cullin-5-RING E3 ubiquitin-protein ligase complex (ECS complex) hijacked by the HIV-1 Vif protein, leading to its degradation. Ubiquitination by the ECS complex is however less efficent compared to APOBEC3G or APOBEC3G. As to expression, expressed in lymphoid organs. Also detected in non-lymphoid tissues including lung, testis, ovary, fetal liver and skin.

It is found in the cytoplasm. The protein resides in the nucleus. Its subcellular location is the P-body. The catalysed reaction is a 2'-deoxycytidine in single-stranded DNA + H2O + H(+) = a 2'-deoxyuridine in single-stranded DNA + NH4(+). Its activity is regulated as follows. APOBEC3H activity is regulated by RNA. While RNA-binding inhibits the DNA deaminase activity, double-stranded RNA is required for HIV-1 restriction by promoting APOBEC3H homodimerization and packaging into retroviral nucleocapsids. With respect to regulation, (Microbial infection) Antiviral activity is inhibited to some extent by the HIV-1 virion infectivity factor (VIF), that prevents its incorporation into progeny virions by both inhibiting its translation and/or by inducing its ubiquitination and subsequent degradation by the 26S proteasome. Functionally, DNA deaminase (cytidine deaminase) which acts as an inhibitor of retrovirus replication and retrotransposon mobility via deaminase-dependent and -independent mechanisms. The A3H-var/haplotype 2 exhibits antiviral activity against vif-deficient HIV-1. After the penetration of retroviral nucleocapsids into target cells of infection and the initiation of reverse transcription, it can induce the conversion of cytosine to uracil in the minus-sense single-strand viral DNA, leading to G-to-A hypermutations in the subsequent plus-strand viral DNA. The resultant detrimental levels of mutations in the proviral genome, along with a deamination-independent mechanism that works prior to the proviral integration, together exert efficient antiretroviral effects in infected target cells. Selectively targets single-stranded DNA and does not deaminate double-stranded DNA or single- or double-stranded RNA. Exhibits antiviral activity also against T-cell leukemia virus type 1 (HTLV-1) and may inhibit the mobility of LTR and non-LTR retrotransposons. The polypeptide is DNA dC-&gt;dU-editing enzyme APOBEC-3H (Homo sapiens (Human)).